A 416-amino-acid chain; its full sequence is Gap junction alpha-3 protein (416 aa).

The stretch at 2–15 (GDWSFLGRLLENAQ) is an intramembrane region. The Cytoplasmic portion of the chain corresponds to 16–19 (EHST). The helical transmembrane segment at 20 to 40 (VIGKVWLTVLFIFRILVLGAA) threads the bilayer. The Extracellular segment spans residues 41–71 (AEEVWGDEQSDFTCNTQQPGCENVCYDRAFP). Intrachain disulfides connect C54–C198, C61–C192, and C65–C187. Residues 72 to 92 (ISHIRFWALQIIFVSTPTLIY) form a helical membrane-spanning segment. Residues 93–158 (LGHVLHIVRM…GALLRTYVFN (66 aa)) are Cytoplasmic-facing. Positions 110 to 128 (EEELLRRDNPQHGRGREPM) are enriched in basic and acidic residues. Residues 110 to 141 (EEELLRRDNPQHGRGREPMRTGSPRDPPLRDD) are disordered. A helical transmembrane segment spans residues 159–179 (IIFKTLFEVGFIAGQYFLYGF). Over 180–207 (QLQPLYRCDRWPCPNTVDCFISRPTEKT) the chain is Extracellular. Residues 208–228 (IFVIFMLAVACASLVLNMLEI) traverse the membrane as a helical segment. Topologically, residues 229–416 (YHLGWKKLKQ…GRARPGDLAI (188 aa)) are cytoplasmic. Positions 336-416 (GAEPQTPASK…GRARPGDLAI (81 aa)) are disordered. Positions 342 to 353 (PASKPSSAASSP) are enriched in low complexity.

It belongs to the connexin family. Alpha-type (group II) subfamily. As to quaternary structure, a hemichannel or connexon is composed of a hexamer of connexins. A functional gap junction is formed by the apposition of two hemichannels. Forms heteromeric channels with GJA8. Detected in eye lens (at protein level). Most abundant in lens, but also present in heart and kidney.

The protein resides in the cell membrane. The protein localises to the cell junction. It is found in the gap junction. Its function is as follows. Structural component of lens fiber gap junctions. Gap junctions are dodecameric channels that connect the cytoplasm of adjoining cells. They are formed by the docking of two hexameric hemichannels, one from each cell membrane. Small molecules and ions diffuse from one cell to a neighboring cell via the central pore. This Rattus norvegicus (Rat) protein is Gap junction alpha-3 protein (Gja3).